A 245-amino-acid polypeptide reads, in one-letter code: UPF0246 protein CE1889 (245 aa).

Residues 1 to 20 (MLILLPPSETKTPGGAGAPL) form a disordered region.

This sequence belongs to the UPF0246 family.

In Corynebacterium efficiens (strain DSM 44549 / YS-314 / AJ 12310 / JCM 11189 / NBRC 100395), this protein is UPF0246 protein CE1889.